The following is a 334-amino-acid chain: Glyceraldehyde-3-phosphate dehydrogenase 1 (334 aa).

Residues 12–13 (RI), Asp35, and Arg79 contribute to the NAD(+) site. Residues 152–154 (SCT), Thr183, Arg198, 211–212 (SG), and Arg234 contribute to the D-glyceraldehyde 3-phosphate site. The active-site Nucleophile is the Cys153. Asn315 contributes to the NAD(+) binding site.

Belongs to the glyceraldehyde-3-phosphate dehydrogenase family. Homotetramer.

It is found in the cytoplasm. It catalyses the reaction D-glyceraldehyde 3-phosphate + phosphate + NAD(+) = (2R)-3-phospho-glyceroyl phosphate + NADH + H(+). It functions in the pathway carbohydrate degradation; glycolysis; pyruvate from D-glyceraldehyde 3-phosphate: step 1/5. Resistant to pentalenolactone. Functionally, catalyzes the oxidative phosphorylation of glyceraldehyde 3-phosphate (G3P) to 1,3-bisphosphoglycerate (BPG) using the cofactor NAD. The first reaction step involves the formation of a hemiacetal intermediate between G3P and a cysteine residue, and this hemiacetal intermediate is then oxidized to a thioester, with concomitant reduction of NAD to NADH. The reduced NADH is then exchanged with the second NAD, and the thioester is attacked by a nucleophilic inorganic phosphate to produce BPG. The polypeptide is Glyceraldehyde-3-phosphate dehydrogenase 1 (gap1) (Streptomyces avermitilis (strain ATCC 31267 / DSM 46492 / JCM 5070 / NBRC 14893 / NCIMB 12804 / NRRL 8165 / MA-4680)).